The following is a 350-amino-acid chain: Delta(6)-protoilludene synthase STEHIDRAFT_64702 (350 aa).

The Mg(2+) site is built by D89, N225, S229, and E233. The short motif at 89-93 (DEHSD) is the D(D/E)XX(D/E) motif element. The NSE motif signature appears at 225 to 233 (NDIVSYNIE). Residues R314 and Y315 each contribute to the (2E,6E)-farnesyl diphosphate site.

This sequence belongs to the terpene synthase family. The cofactor is Mg(2+). Requires Mn(2+) as cofactor. It depends on Ca(2+) as a cofactor. Ni(2+) serves as cofactor. Co(2+) is required as a cofactor.

The catalysed reaction is (2E,6E)-farnesyl diphosphate = Delta(6)-protoilludene + diphosphate. It catalyses the reaction (2E,6E)-farnesyl diphosphate = alpha-selinene + diphosphate. With respect to regulation, ca(2+) switches the cyclization mechanism of delta(6)-protoilludene synthase from 1,11 to 1,10 cyclization which leads to the production of beta-elemene. Functionally, terpene cyclase that catalyzes the cyclization of farnesyl diphosphate (FPP) to delta(6)-protoilludene. In presence of Ca(2+), a significant switch from 1,11 to a dual 1,11/1,10 cyclization occurs, producing beta-elemene as the major product, with lower levels of delta(6)-protoilludene and (E)-beta-caryophyllene, and traces of beta-selinene and alpha-selinene. This is Delta(6)-protoilludene synthase STEHIDRAFT_64702 from Stereum hirsutum (strain FP-91666) (White-rot fungus).